The sequence spans 885 residues: Chitobiase (885 aa).

The N-terminal stretch at 1 to 27 is a signal peptide; sequence MNAFKLSALARLTATMGFLGGMGSAMA. 3 disulfide bridges follow: C56–C66, C400–C408, and C505–C578. The active-site Proton donor is E540. Residues 866–885 are disordered; the sequence is EVQVRSVSPDGKRYSRAEKV. Positions 875–885 are enriched in basic and acidic residues; the sequence is DGKRYSRAEKV.

It belongs to the glycosyl hydrolase 20 family. As to quaternary structure, monomer.

It localises to the periplasm. It catalyses the reaction Hydrolysis of terminal non-reducing N-acetyl-D-hexosamine residues in N-acetyl-beta-D-hexosaminides.. It functions in the pathway glycan degradation; chitin degradation. Functionally, digests the beta-1,4-glycosidic bonds in N-acetylglucosamine (GlcNAc) oligomers (mainly dimers). This Serratia marcescens protein is Chitobiase (chb).